Reading from the N-terminus, the 363-residue chain is Copper-containing nitrite reductase (363 aa).

The first 24 residues, 1 to 24 (MSVFRSVLGACVLLGSCASSLALA), serve as a signal peptide directing secretion. Plastocyanin-like domains are found at residues 25 to 193 (GGAE…YDRV) and 194 to 363 (YTIG…EPKQ). Residues H113, H118, H153, C154, H163, M168, and H324 each contribute to the Cu cation site.

This sequence belongs to the multicopper oxidase family. As to quaternary structure, homotrimer. Requires Cu(2+) as cofactor. The cofactor is Cu(+). FAD is required as a cofactor.

Its subcellular location is the periplasm. It catalyses the reaction nitric oxide + Fe(III)-[cytochrome c] + H2O = Fe(II)-[cytochrome c] + nitrite + 2 H(+). The protein operates within nitrogen metabolism; nitrate reduction (denitrification); dinitrogen from nitrate: step 2/4. This Pseudomonas chlororaphis (Pseudomonas aureofaciens) protein is Copper-containing nitrite reductase (nirK).